A 105-amino-acid chain; its full sequence is Large ribosomal subunit protein uL24 (105 aa).

The protein belongs to the universal ribosomal protein uL24 family. In terms of assembly, part of the 50S ribosomal subunit.

Its function is as follows. One of two assembly initiator proteins, it binds directly to the 5'-end of the 23S rRNA, where it nucleates assembly of the 50S subunit. One of the proteins that surrounds the polypeptide exit tunnel on the outside of the subunit. The sequence is that of Large ribosomal subunit protein uL24 from Clostridium botulinum (strain ATCC 19397 / Type A).